Reading from the N-terminus, the 130-residue chain is uncharacterized protein (130 aa).

Residues 23–130 (SHLRLLPTAN…GAHQLSSPSS (108 aa)) form a disordered region. Residues 30 to 45 (TANSPSGSNQPTNPNR) show a composition bias toward polar residues.

This is an uncharacterized protein from Homo sapiens (Human).